Here is a 103-residue protein sequence, read N- to C-terminus: N(4)-acetylcytidine amidohydrolase (103 aa).

The region spanning 6 to 92 (TFFERFEPGI…VIQEIYPGLE (87 aa)) is the ASCH domain. The active-site Proton acceptor is the K20. The active-site Nucleophile is the T23. E73 acts as the Proton donor in catalysis.

Belongs to the N(4)-acetylcytidine amidohydrolase family.

It catalyses the reaction N(4)-acetylcytidine + H2O = cytidine + acetate + H(+). It carries out the reaction N(4)-acetyl-2'-deoxycytidine + H2O = 2'-deoxycytidine + acetate + H(+). The enzyme catalyses N(4)-acetylcytosine + H2O = cytosine + acetate + H(+). Functionally, catalyzes the hydrolysis of N(4)-acetylcytidine (ac4C). In Shewanella sp. (strain MR-7), this protein is N(4)-acetylcytidine amidohydrolase.